We begin with the raw amino-acid sequence, 362 residues long: Snurportin-1 (362 aa).

An N-acetylmethionine modification is found at methionine 1. 2 disordered regions span residues 1-40 (MEEL…SLEQ) and 69-90 (DWTG…MDVD). The necessary for interaction with KPNB1 and m3G-cap U1 and U5 snRNP import receptor activity stretch occupies residues 1–65 (MEELSQALAG…LDYVNHARRL (65 aa)). The tract at residues 1 to 160 (MEELSQALAG…NTFPSLLPGG (160 aa)) is necessary for interaction with XPO1. Residues 11–73 (SFSVSQDLNS…RLAEDDWTGM (63 aa)) form the IBB domain. Positions 12 to 22 (FSVSQDLNSTA) are enriched in polar residues. Residues 69–89 (DWTGMESEEEEEKKDDEEMDV) show a composition bias toward acidic residues. Serine 75 carries the phosphoserine modification. The interval 128–130 (GKR) is interaction with m3G-cap structure. The segment at 210–330 (LHSKLPEEEG…GIMGKLTPRA (121 aa)) is necessary for binding to the m3G-cap structure. Residues 319 to 362 (KEGIMGKLTPRASENGHYELEHLSTPKLKSPPQRPNHPESLMEN) are disordered. Positions 332-342 (ENGHYELEHLS) are enriched in basic and acidic residues.

The protein belongs to the snurportin family. In terms of assembly, component of an import snRNP complex composed of KPNB1, SNUPN, SMN1 and ZNF259. Component of a nuclear export receptor complex composed of KPNB1, Ran, SNUPN and XPO1. Found in a trimeric export complex with SNUPN, Ran and XPO1. Interacts (via IBB domain) with KPNB1; the interaction is direct. Interacts with DDX20, IPO7, SMN1, SNRPB and XPO1. Interacts directly with XPO1. Its interaction with XPO1 and binding to m3G-cap U snRNPs appears to be mutually exclusive. Can form homomers.

The protein localises to the nucleus. Its subcellular location is the cytoplasm. Its function is as follows. Functions as an U snRNP-specific nuclear import adapter. Involved in the trimethylguanosine (m3G)-cap-dependent nuclear import of U snRNPs. Binds specifically to the terminal m3G-cap U snRNAs. In Bos taurus (Bovine), this protein is Snurportin-1 (SNUPN).